A 455-amino-acid polypeptide reads, in one-letter code: Chromosomal replication initiator protein DnaA (455 aa).

The domain I, interacts with DnaA modulators stretch occupies residues 1–75 (MLERNDLWNL…AMQATNEQIR (75 aa)). Residues 75–117 (RPVMITEEERQQLTRDKDSQVTTGNVAGQQPTTATTPTFMRET) form a domain II region. The span at 84–93 (RQQLTRDKDS) shows a compositional bias: basic and acidic residues. The tract at residues 84 to 107 (RQQLTRDKDSQVTTGNVAGQQPTT) is disordered. Residues 118–334 (KLNPKYTFDT…GALARVQAYS (217 aa)) are domain III, AAA+ region. 4 residues coordinate ATP: Gly162, Gly164, Lys165, and Thr166. Residues 335 to 455 (RLNNSPITTS…VGDLTGQLKS (121 aa)) form a domain IV, binds dsDNA region.

This sequence belongs to the DnaA family. Oligomerizes as a right-handed, spiral filament on DNA at oriC.

It localises to the cytoplasm. Its function is as follows. Plays an essential role in the initiation and regulation of chromosomal replication. ATP-DnaA binds to the origin of replication (oriC) to initiate formation of the DNA replication initiation complex once per cell cycle. Binds the DnaA box (a 9 base pair repeat at the origin) and separates the double-stranded (ds)DNA. Forms a right-handed helical filament on oriC DNA; dsDNA binds to the exterior of the filament while single-stranded (ss)DNA is stabiized in the filament's interior. The ATP-DnaA-oriC complex binds and stabilizes one strand of the AT-rich DNA unwinding element (DUE), permitting loading of DNA polymerase. After initiation quickly degrades to an ADP-DnaA complex that is not apt for DNA replication. Binds acidic phospholipids. This chain is Chromosomal replication initiator protein DnaA, found in Lactiplantibacillus plantarum (strain ATCC BAA-793 / NCIMB 8826 / WCFS1) (Lactobacillus plantarum).